The primary structure comprises 312 residues: Ribose-phosphate pyrophosphokinase (312 aa).

ATP contacts are provided by residues 34–36 (DLE) and 93–94 (RQ). Mg(2+)-binding residues include H127 and D168. K192 is a catalytic residue. D-ribose 5-phosphate contacts are provided by residues R194, D218, and 222–226 (DSAGT).

Belongs to the ribose-phosphate pyrophosphokinase family. Class I subfamily. As to quaternary structure, homohexamer. It depends on Mg(2+) as a cofactor.

Its subcellular location is the cytoplasm. The enzyme catalyses D-ribose 5-phosphate + ATP = 5-phospho-alpha-D-ribose 1-diphosphate + AMP + H(+). It functions in the pathway metabolic intermediate biosynthesis; 5-phospho-alpha-D-ribose 1-diphosphate biosynthesis; 5-phospho-alpha-D-ribose 1-diphosphate from D-ribose 5-phosphate (route I): step 1/1. Functionally, involved in the biosynthesis of the central metabolite phospho-alpha-D-ribosyl-1-pyrophosphate (PRPP) via the transfer of pyrophosphoryl group from ATP to 1-hydroxyl of ribose-5-phosphate (Rib-5-P). The chain is Ribose-phosphate pyrophosphokinase from Caulobacter vibrioides (strain ATCC 19089 / CIP 103742 / CB 15) (Caulobacter crescentus).